A 174-amino-acid chain; its full sequence is MAAANKGNKSRVRSIRFATSHDAESSQSHVHFDEKLHDSVVMVTQESDSSFLVKVGFLKILHRYEITFTLPPVHRLSKDVRETPVPSLHLKLLSVMPIPEGYSVKCEYSAHKEGVLKEEMLLACEGGSDTCVRVIVQARVMDRHHGTPMLLDGVRCVGAELEYDSEHSDWRGFD.

Position 2 is an N-acetylalanine (A2). A Phosphothreonine modification is found at T147.

The protein belongs to the ADISSP family.

It localises to the secreted. Adipocyte-secreted protein (adipokine) that acts as a key regulator for white adipose tissue (WAT) thermogenesis and glucose homeostasis at least in part through activation of protein kinase A (PKA). In Bos taurus (Bovine), this protein is Adipose-secreted signaling protein.